The chain runs to 89 residues: MSRTVFCCKLKQEAEGLEKQPFPGELGKKVFNEVSKQAWNMWLSHQTMLINEYRLNLIEARAREFLKEEMQKYFFGEGSEKPSGYKEIK.

The protein belongs to the Fe(2+)-trafficking protein family.

Functionally, could be a mediator in iron transactions between iron acquisition and iron-requiring processes, such as synthesis and/or repair of Fe-S clusters in biosynthetic enzymes. This chain is Probable Fe(2+)-trafficking protein, found in Legionella pneumophila (strain Paris).